A 129-amino-acid polypeptide reads, in one-letter code: Antimicrobial peptide NK-lysin (129 aa).

The N-terminal stretch at Pro-1–Ser-6 is a signal peptide. The propeptide occupies Gly-7–Leu-46. Residues Leu-46–Thr-126 enclose the Saposin B-type domain. Disulfide bonds link Cys-50/Cys-122, Cys-53/Cys-116, and Cys-81/Cys-91. Positions Lys-125–Ile-129 are excised as a propeptide.

In terms of tissue distribution, cytotoxic T and NK cells.

It is found in the secreted. In terms of biological role, may be an effector molecule of cytotoxic activity. High activity against E.coli and B.megaterium, moderate against A.calcoaceticus and S.pyogenes. No activity against P.aeruginosa, S.aureus and Salmonella. Has some antifungal activity against C.albicans. This Sus scrofa (Pig) protein is Antimicrobial peptide NK-lysin (NKL).